The following is a 149-amino-acid chain: NPC intracellular cholesterol transporter 2 (149 aa).

Residues 1–19 (MRFLAATILLLALVAASQA) form the signal peptide. Cystine bridges form between C27/C140, C42/C47, and C93/C99. N-linked (GlcNAc...) asparagine glycans are attached at residues N58 and N69. K116 is modified (N6-acetyllysine).

The protein belongs to the NPC2 family. Interacts with NPC1 (via the second lumenal domain) in a cholestrol-dependent manner. Interacts with NUS1/NgBR, the interaction stabilizes NCP2 and regulates cholesterol trafficking. Interacts with DHDDS. Interacts with NEDD4L (via C2 domain). Interacts with NPC1L1. N-glycosylated. In terms of tissue distribution, detected in liver and bile. Detected in epididymis (at protein level). Detected in caput epididymis, corpus epididymis, cauda epididymis and ovary.

Its subcellular location is the secreted. It is found in the endoplasmic reticulum. It localises to the lysosome. The enzyme catalyses cholesterol(in) = cholesterol(out). Its function is as follows. Intracellular cholesterol transporter which acts in concert with NPC1 and plays an important role in the egress of cholesterol from the lysosomal compartment. Unesterified cholesterol that has been released from LDLs in the lumen of the late endosomes/lysosomes is transferred by NPC2 to the cholesterol-binding pocket in the N-terminal domain of NPC1. May bind and mobilize cholesterol that is associated with membranes. NPC2 binds cholesterol with a 1:1 stoichiometry. Can bind a variety of sterols, including lathosterol, desmosterol and the plant sterols stigmasterol and beta-sitosterol. The secreted form of NCP2 regulates biliary cholesterol secretion via stimulation of ABCG5/ABCG8-mediated cholesterol transport. The sequence is that of NPC intracellular cholesterol transporter 2 from Mus musculus (Mouse).